The sequence spans 488 residues: NADH-ubiquinone oxidoreductase chain 2 (488 aa).

The next 14 helical transmembrane spans lie at 4–24 (LFLA…LLIH), 45–65 (WLGL…APLL), 84–104 (FCQI…FDFF), 111–131 (AFEF…MISA), 134–154 (LIAM…LAAS), 168–188 (YLIL…MIYG), 215–235 (IFMG…AVPF), 252–272 (AFLS…VFIY), 282–302 (IFFF…MAQT), 308–328 (LAYS…CGTI), 334–354 (LLIG…IVLA), 375–395 (ILAI…PLAG), 400–420 (FYLF…VGVV), and 456–476 (LLLA…SPLF).

Belongs to the complex I subunit 2 family.

Its subcellular location is the mitochondrion inner membrane. It catalyses the reaction a ubiquinone + NADH + 5 H(+)(in) = a ubiquinol + NAD(+) + 4 H(+)(out). In terms of biological role, core subunit of the mitochondrial membrane respiratory chain NADH dehydrogenase (Complex I) that is believed to belong to the minimal assembly required for catalysis. Complex I functions in the transfer of electrons from NADH to the respiratory chain. The immediate electron acceptor for the enzyme is believed to be ubiquinone. In Oenothera berteroana (Bertero's evening primrose), this protein is NADH-ubiquinone oxidoreductase chain 2 (ND2).